The primary structure comprises 288 residues: MTSPSVREWRDGGRWLPTAVGKVFVRSGPGDTPTMLLLHGYPSSSFDFRAVIPHLTGQAWVTMDFLGFGLSDKPRPHRYSLLEQAHLVETVVAHTVTGAVVVLAHDMGTSVTTELLARDLDGRLPFDLRRAVLSNGSVILERASLRPIQKVLRSPLGPVAARLVSRGGFTRGFGRIFSPAHPLSAQEAQAQWELLCYNDGNRIPHLLISYLDERIRHAQRWHGAVRDWPKPLGFVWGLDDPVATTNVLNGLRELRPSAAVVELPGLGHYPQVEAPKAYAEAALSLLVD.

Belongs to the AB hydrolase superfamily.

The protein is Putative hydrolase LipZ of Mycobacterium tuberculosis (strain CDC 1551 / Oshkosh).